A 317-amino-acid chain; its full sequence is Zinc transporter ZIP3 (317 aa).

Residues 1 to 3 are Extracellular-facing; that stretch reads MTK. The helical transmembrane segment at 4–24 threads the bilayer; the sequence is LLVAKVLCMVGVFFFMLLGSL. At 25–42 the chain is on the cytoplasmic side; it reads LPVKVIEADLEKAHRSKK. A helical membrane pass occupies residues 43–63; that stretch reads VLSLCNTFGGGVFLATCFNAL. The Extracellular segment spans residues 64–85; sequence LPAVRDKLQQVLSLGHISTDYP. The helical transmembrane segment at 86–106 threads the bilayer; the sequence is LAETLMMVGFFLTVFVEQLVL. The Cytoplasmic portion of the chain corresponds to 107-172; it reads TFRRERPPFI…RELGRPGPLR (66 aa). 2 positions are modified to phosphoserine: Ser-125 and Ser-129. A helical membrane pass occupies residues 173-193; that stretch reads LLSLVFALSAHSVFEGLALGL. The Extracellular portion of the chain corresponds to 194 to 199; that stretch reads QEEGER. The helical transmembrane segment at 200–220 threads the bilayer; the sequence is VVSLFVGVAIHETLVAVALGI. Residues 221 to 232 lie on the Cytoplasmic side of the membrane; that stretch reads SMARSAVPLRDA. Residues 233 to 253 form a helical membrane-spanning segment; sequence AKLAVTVSAMIPVGIGLGLGI. Over 254 to 265 the chain is Extracellular; that stretch reads ESARSVASSVAS. A helical transmembrane segment spans residues 266–286; the sequence is ALLQGLAGGTFLFVTFLEILA. Residues 287–294 are Cytoplasmic-facing; that stretch reads KELEERSE. The helical transmembrane segment at 295–315 threads the bilayer; sequence QLLKVLFLVLGYAVLAGMVFL. Residues 316 to 317 are Extracellular-facing; the sequence is KW.

The protein belongs to the ZIP transporter (TC 2.A.5) family. As to expression, highly expressed in the testes. Highly expressed in dentate gyrus granule cells of the hippocampus. Expressed in the mammary gland.

The protein localises to the cell membrane. It is found in the apical cell membrane. It carries out the reaction Zn(2+)(in) = Zn(2+)(out). Transporter for the divalent cation Zn(2+). Mediates the influx of Zn(2+) into cells from extracellular space. Controls Zn(2+) accumulation into dentate gyrus granule cells in the hippocampus. Mediates Zn(2+) reuptake from the secreted milk within the alveolar lumen. This chain is Zinc transporter ZIP3 (Slc39a3), found in Mus musculus (Mouse).